Reading from the N-terminus, the 900-residue chain is Serine-rich coiled-coil domain-containing protein 1 (900 aa).

Disordered stretches follow at residues 1 to 100 (MGDS…HSNM) and 156 to 178 (KSEGDDSGFTEDQTRRSVKQSTR). Over residues 29-56 (LPSSPSSSNTVGVHSSSPSSTNSSSGST) the composition is skewed to low complexity. Residues 81-100 (EPTNQNLSISNGAQPGHSNM) show a composition bias toward polar residues. A coiled-coil region spans residues 673 to 707 (MKDECSMLKLQLKEKDELISQLQEELGKVRHLQKA).

Belongs to the CCSER family.

This is Serine-rich coiled-coil domain-containing protein 1 (CCSER1) from Homo sapiens (Human).